The following is a 74-amino-acid chain: Major structural pilin EpdE (74 aa).

Positions 1–12 (MKFLEKLTSKKG) are excised as a propeptide. Residue Gln13 is modified to Pyrrolidone carboxylic acid. The QXSXEXXXL signature appears at 13–21 (QIAMELGIL).

Post-translationally, the N-terminus is cleaved by the prepilin peptidase EppA, which recognizes the class III signal sequence. In terms of processing, N-glycosylated. Glycosylated with an N-linked branched pentasaccharide glycan. May contain glycans at three sites. Glycosylation is AglB-dependent. The N-glycosylation does not occur unless the signal peptide has been cleaved first.

It localises to the secreted. Its subcellular location is the cell surface. It is found in the fimbrium. In terms of biological role, major component of the type IV-like pili. The sequence is that of Major structural pilin EpdE from Methanococcus maripaludis (strain DSM 14266 / JCM 13030 / NBRC 101832 / S2 / LL).